A 95-amino-acid chain; its full sequence is MAHKKGTGSTRNGRDSNAQRLGVKRYGGERVKAGNILIRQRGTKIHPGANVGRGSDDTLFALIEGIVTFERLGRDRKKVSVYPLAQTAMQPVAAE.

The segment at 1 to 25 (MAHKKGTGSTRNGRDSNAQRLGVKR) is disordered. The span at 7-19 (TGSTRNGRDSNAQ) shows a compositional bias: polar residues.

It belongs to the bacterial ribosomal protein bL27 family.

The protein is Large ribosomal subunit protein bL27 of Gloeobacter violaceus (strain ATCC 29082 / PCC 7421).